Consider the following 629-residue polypeptide: tRNA uridine 5-carboxymethylaminomethyl modification enzyme MnmG (629 aa).

Residues 15–20 (GAGHAG), valine 127, and serine 182 contribute to the FAD site. A disordered region spans residues 203–226 (TPPRVKSSTIDYSKTEEQPGDDHP). Positions 215–226 (SKTEEQPGDDHP) are enriched in basic and acidic residues. NAD(+) is bound at residue 274-288 (GARYCPSIEDKIVRF). FAD is bound at residue glutamine 371.

It belongs to the MnmG family. As to quaternary structure, homodimer. Heterotetramer of two MnmE and two MnmG subunits. Requires FAD as cofactor.

Its subcellular location is the cytoplasm. In terms of biological role, NAD-binding protein involved in the addition of a carboxymethylaminomethyl (cmnm) group at the wobble position (U34) of certain tRNAs, forming tRNA-cmnm(5)s(2)U34. This Listeria innocua serovar 6a (strain ATCC BAA-680 / CLIP 11262) protein is tRNA uridine 5-carboxymethylaminomethyl modification enzyme MnmG.